A 254-amino-acid polypeptide reads, in one-letter code: Imidazole glycerol phosphate synthase subunit HisF (254 aa).

Active-site residues include Asp-13 and Asp-132.

Belongs to the HisA/HisF family. As to quaternary structure, heterodimer of HisH and HisF.

It localises to the cytoplasm. The enzyme catalyses 5-[(5-phospho-1-deoxy-D-ribulos-1-ylimino)methylamino]-1-(5-phospho-beta-D-ribosyl)imidazole-4-carboxamide + L-glutamine = D-erythro-1-(imidazol-4-yl)glycerol 3-phosphate + 5-amino-1-(5-phospho-beta-D-ribosyl)imidazole-4-carboxamide + L-glutamate + H(+). Its pathway is amino-acid biosynthesis; L-histidine biosynthesis; L-histidine from 5-phospho-alpha-D-ribose 1-diphosphate: step 5/9. In terms of biological role, IGPS catalyzes the conversion of PRFAR and glutamine to IGP, AICAR and glutamate. The HisF subunit catalyzes the cyclization activity that produces IGP and AICAR from PRFAR using the ammonia provided by the HisH subunit. This Nautilia profundicola (strain ATCC BAA-1463 / DSM 18972 / AmH) protein is Imidazole glycerol phosphate synthase subunit HisF.